A 142-amino-acid chain; its full sequence is Large ribosomal subunit protein uL11 (142 aa).

Belongs to the universal ribosomal protein uL11 family. In terms of assembly, part of the ribosomal stalk of the 50S ribosomal subunit. Interacts with L10 and the large rRNA to form the base of the stalk. L10 forms an elongated spine to which L12 dimers bind in a sequential fashion forming a multimeric L10(L12)X complex. One or more lysine residues are methylated.

Its function is as follows. Forms part of the ribosomal stalk which helps the ribosome interact with GTP-bound translation factors. This is Large ribosomal subunit protein uL11 from Vibrio vulnificus (strain YJ016).